A 187-amino-acid polypeptide reads, in one-letter code: UPF0301 protein Pcryo_0062 (187 aa).

It belongs to the UPF0301 (AlgH) family.

This Psychrobacter cryohalolentis (strain ATCC BAA-1226 / DSM 17306 / VKM B-2378 / K5) protein is UPF0301 protein Pcryo_0062.